Reading from the N-terminus, the 369-residue chain is Flagellar P-ring protein (369 aa).

The first 22 residues, 1 to 22 (MLNFKHLMAAALLLSTSLGVQA), serve as a signal peptide directing secretion.

The protein belongs to the FlgI family. As to quaternary structure, the basal body constitutes a major portion of the flagellar organelle and consists of four rings (L,P,S, and M) mounted on a central rod.

Its subcellular location is the periplasm. The protein resides in the bacterial flagellum basal body. Functionally, assembles around the rod to form the L-ring and probably protects the motor/basal body from shearing forces during rotation. This is Flagellar P-ring protein from Pseudomonas fluorescens (strain ATCC BAA-477 / NRRL B-23932 / Pf-5).